The following is a 952-amino-acid chain: Meiosis-specific coiled-coil domain-containing protein MEIOC (952 aa).

3 disordered regions span residues 1 to 23, 609 to 629, and 933 to 952; these read MEVR…EGLE, QAKP…LDGL, and VHES…TNKH. The segment covering 617 to 627 has biased composition (basic and acidic residues); the sequence is YDPEEGPKHLD. Residues 936 to 952 are compositionally biased toward polar residues; that stretch reads SINSSNPMNQRGETNKH.

Interacts with YTHDC2; binds transcript that regulate the mitotic cell cycle inhibiting progression into metaphase, thereby allowing meiotic prophase to proceed normally. Interacts with RBM46. In terms of tissue distribution, expressed in fetal ovaries. Expressed in testis.

It localises to the cytoplasm. Its subcellular location is the nucleus. In terms of biological role, is required for meiosis completion in both male and female germ cells. Confers stability to numerous meiotic mRNAs in gonads allowing proper initiation and progression into meiosis prophase I. The function may involve YTHDC2 and is independent of induction by retinoic acid (RA). Maintains an extended meiotic prophase I by properly promoting the transition from a mitotic to a meiotic cell cycle program by binding transcripts through its interaction with YTHDC2 that regulate the mitotic cell cycle. This chain is Meiosis-specific coiled-coil domain-containing protein MEIOC, found in Homo sapiens (Human).